We begin with the raw amino-acid sequence, 335 residues long: HTH-type transcriptional regulator LacR (335 aa).

In terms of domain architecture, HTH lacI-type spans 1 to 58 (MRTIKEIALESGYSPATVSRLLNNDPNLSITADTKNKILEIANKLGYWEDHQEKKIKP). The segment at residues 4 to 23 (IKEIALESGYSPATVSRLLN) is a DNA-binding region (H-T-H motif).

Its pathway is carbohydrate metabolism; lactose degradation [regulation]. Its function is as follows. Negatively regulates the transcription of the lactose utilization genes lacL and lacM. This Lactobacillus helveticus (Lactobacillus suntoryeus) protein is HTH-type transcriptional regulator LacR (lacR).